The sequence spans 582 residues: Formate--tetrahydrofolate ligase (582 aa).

65–72 (TPLGEGKT) is an ATP binding site.

This sequence belongs to the formate--tetrahydrofolate ligase family.

It carries out the reaction (6S)-5,6,7,8-tetrahydrofolate + formate + ATP = (6R)-10-formyltetrahydrofolate + ADP + phosphate. It functions in the pathway one-carbon metabolism; tetrahydrofolate interconversion. In Vibrio cholerae serotype O1 (strain ATCC 39315 / El Tor Inaba N16961), this protein is Formate--tetrahydrofolate ligase.